The following is a 403-amino-acid chain: MTDATTVHPLYDTYNRAALRFERGEGIWLITEDGERYIDFAAGIAVNSLGHSHPHLVETLKTQAEKLWHLSNVYEIPAQEKLGRRLVESTFADKVFFTNSGAEALECAIKTARRYQYVSGHPERFRIITFEGAFHGRTLATIAAGGQAKYLEGFGPKVEGFDQVPFGDEAALRAAITPETAGILLEPIQGEGGLRAFPEEFLRLVRQICDENGLLLLLDEVQTGVGRTGKLFAHEWAGIRPDIMAIAKGIGGGFPIGACLATAEAAKGMTAGMHGTTYGGNPLGMAVGNAVLDVVLADGFMENVQATALVMKQGLASLVDRYPNVVSEIRGRGLLMGLKCVVPNTSLIQALRDEHILSVGAGDNVVRLLPPLITTPEEAREALKHIETAVERLSIANPISKTV.

Pyridoxal 5'-phosphate is bound by residues 101–102 and Phe134; that span reads GA. Position 137 (Arg137) interacts with N(2)-acetyl-L-ornithine. 219 to 222 is a pyridoxal 5'-phosphate binding site; the sequence is DEVQ. Lys248 carries the post-translational modification N6-(pyridoxal phosphate)lysine. Thr276 provides a ligand contact to N(2)-acetyl-L-ornithine. Thr277 is a pyridoxal 5'-phosphate binding site.

This sequence belongs to the class-III pyridoxal-phosphate-dependent aminotransferase family. ArgD subfamily. As to quaternary structure, homodimer. Pyridoxal 5'-phosphate serves as cofactor.

Its subcellular location is the cytoplasm. The enzyme catalyses N(2)-acetyl-L-ornithine + 2-oxoglutarate = N-acetyl-L-glutamate 5-semialdehyde + L-glutamate. It functions in the pathway amino-acid biosynthesis; L-arginine biosynthesis; N(2)-acetyl-L-ornithine from L-glutamate: step 4/4. The polypeptide is Acetylornithine aminotransferase (Brucella melitensis biotype 1 (strain ATCC 23456 / CCUG 17765 / NCTC 10094 / 16M)).